Here is a 158-residue protein sequence, read N- to C-terminus: Cathelicidin-6 (158 aa).

A signal peptide spans 1 to 29 (METQRASLSLGRWSLWLLLLGLALPSASA). A propeptide spanning residues 30–131 (QALSYREAVL…NVTCEELQSV (102 aa)) is cleaved from the precursor. Intrachain disulfides connect Cys86-Cys97 and Cys108-Cys125.

The protein belongs to the cathelicidin family.

The protein localises to the secreted. In terms of biological role, exerts a potent antimicrobial activity against Gram-negative and Gram-positive bacteria, including methicillin-resistant Staphylococcus aureus, and fungi. The sequence is that of Cathelicidin-6 (CATHL6) from Bos taurus (Bovine).